Consider the following 228-residue polypeptide: Prolactin-2B1 (228 aa).

A signal peptide spans 1–31; sequence MLLSLTQMLSSRASSRLFLVSYLLLWENVVS. Cystine bridges form between Cys-89/Cys-194 and Cys-203/Cys-228.

This sequence belongs to the somatotropin/prolactin family. In terms of tissue distribution, expressed specifically in placenta. Expressed at high levels in trophoblast cells from both junctional and labyrinth zones of the chorioallantoic placenta the last week of gestation.

Its subcellular location is the secreted. In Mus musculus (Mouse), this protein is Prolactin-2B1 (Prl2b1).